The sequence spans 570 residues: PTS system lactose-specific EIICB component (570 aa).

The PTS EIIC type-3 domain occupies 9–410; it reads IEKGKPFFEK…VVDIIIYYPF (402 aa). 9 helical membrane-spanning segments follow: residues 31–51, 65–85, 104–124, 133–153, 178–198, 223–243, 283–303, 340–360, and 382–402; these read GFIS…IAYV, AILM…VAGT, INFI…ASDP, AFMG…TVIV, FKDL…DLVI, GWIG…VGIH, MFIV…MFMW, VFFI…KLFV, and IIMG…LIVV. The 104-residue stretch at 467–570 folds into the PTS EIIB type-3 domain; that stretch reads QTNVLVLCAG…LDFVQQQFEN (104 aa). Catalysis depends on Cys-474, which acts as the Phosphocysteine intermediate; for EIIB activity. A Phosphocysteine; by EIIA modification is found at Cys-474.

It localises to the cell membrane. The enzyme catalyses lactose(out) + N(pros)-phospho-L-histidyl-[protein] = lactose 6-phosphate(in) + L-histidyl-[protein]. Functionally, the phosphoenolpyruvate-dependent sugar phosphotransferase system (sugar PTS), a major carbohydrate active transport system, catalyzes the phosphorylation of incoming sugar substrates concomitantly with their translocation across the cell membrane. The enzyme II LacEF PTS system is involved in lactose transport. The sequence is that of PTS system lactose-specific EIICB component from Staphylococcus aureus (strain MSSA476).